Reading from the N-terminus, the 274-residue chain is MGMKFFNPVTPSSRGTILISKIGLSKDKPEKSLVFGKKSSGGRNNHGRITTRHRGGGHKKKYRVIDFKRNRSDQGIVEKIEYDPNRSGFLALISYKEDDTKSYILAPQGMKPGDVVTAGDDADILPGNCLLLKHIPVGSFVHNVELKPGNGAAIARAAGCYAQIVGRDGQYVLLRLRSGQIRLILSSCKATIGVVSNLDHKNRKLGKAGRSRWLGIRPAVRGVAMNPVDHPHGGGEGKTSGGRHPVTPWGVATKGKKTRKKNKSSDKYIKKLKG.

2 disordered regions span residues 35–55 and 224–274; these read FGKK…RHRG and AMNP…KLKG. A compositionally biased stretch (basic residues) spans 45–55; that stretch reads NHGRITTRHRG. Positions 263 to 274 are enriched in basic and acidic residues; the sequence is KSSDKYIKKLKG.

It belongs to the universal ribosomal protein uL2 family. In terms of assembly, part of the 50S ribosomal subunit. Forms a bridge to the 30S subunit in the 70S ribosome.

One of the primary rRNA binding proteins. Required for association of the 30S and 50S subunits to form the 70S ribosome, for tRNA binding and peptide bond formation. It has been suggested to have peptidyltransferase activity; this is somewhat controversial. Makes several contacts with the 16S rRNA in the 70S ribosome. This is Large ribosomal subunit protein uL2 from Wolbachia pipientis subsp. Culex pipiens (strain wPip).